The chain runs to 334 residues: AA9 family lytic polysaccharide monooxygenase A (334 aa).

An N-terminal signal peptide occupies residues Met-1–Ala-22. Cu(2+) is bound by residues His-23 and His-108. 2 cysteine pairs are disulfide-bonded: Cys-78–Cys-200 and Cys-119–Cys-123. N-linked (GlcNAc...) asparagine glycosylation is present at Asn-160. His-186 and Gln-195 together coordinate O2. Tyr-197 lines the Cu(2+) pocket. Residue Asn-208 is glycosylated (N-linked (GlcNAc...) asparagine). Residues Gly-244 to Pro-304 form a disordered region. The segment covering Thr-249–Pro-265 has biased composition (low complexity).

Belongs to the polysaccharide monooxygenase AA9 family. The cofactor is Cu(2+).

The protein resides in the secreted. The catalysed reaction is [(1-&gt;4)-beta-D-glucosyl]n+m + reduced acceptor + O2 = 4-dehydro-beta-D-glucosyl-[(1-&gt;4)-beta-D-glucosyl]n-1 + [(1-&gt;4)-beta-D-glucosyl]m + acceptor + H2O.. Its function is as follows. Lytic polysaccharide monooxygenase (LPMO) that depolymerizes crystalline and amorphous polysaccharides via the oxidation of scissile alpha- or beta-(1-4)-glycosidic bonds, yielding C1 or C4 oxidation products. Catalysis by LPMOs requires the reduction of the active-site copper from Cu(II) to Cu(I) by a reducing agent and H(2)O(2) or O(2) as a cosubstrate. Active on hemicelluloses, including xylan, glucomannan, and xyloglucan. Shows clear activity on cellooligosaccharides, generating C4 oxidation products. Also displays activity on konjac glucomannan (KGM), a linear beta-1,4-linked mannan with randomly distributed glucosyl residues; as well as trace activity on lichenan, a linear beta-1,3-beta-1,4-glucan with a 1:2 ratio of beta-1,3 to beta-1,4 linkages. Has no activity on ivory nut mannan (INM), a linear beta-1,4-linked mannan without substitutions. This is AA9 family lytic polysaccharide monooxygenase A from Malbranchea cinnamomea (Thermophilic fungus).